A 619-amino-acid polypeptide reads, in one-letter code: MSKIIGIDLGTTNSCVAVMEGGEPVVITNSEGARTTPSVVSFQANGERLVGQVAKRQAITNPDKTIMSIKRHMGTDYKVNIDGKDYTPQEISAMILQKLKADAEAYLGEKVTEAVITVPAYFNDAERQATKDAGRIAGLDVKRIINEPTAASLAYGLDKMDSAHKILVYDLGGGTFDVSILDLGDGVFEVVSTNGDARLGGDDFDQRIIDYIAEDFKAQNGIDLRQDKMALQRLKEAAEKAKIELSSSTQTLINLPFITADATGPKHIDMTLTRAKFNELTHDLVERTINIMKEALKSGNVSLNDIDKVILVGGSTRIPAVQEAVKNFTGKEPSKGVNPDECVAMGAAIQAGVLTGDVKDVLLLDVTPLTLGIETLGGVATPLIERNTTIPARKSQIFSTAADNQTSVEIHVVQGERQMAADNKTLGRFTLSGIAPAPRGIPQIEVAFDIDANGIVKVSATDKATGKEANITITASTNLSDAEIDKAVKEAEQFAEEDKKRKEAIEVKNNAEQTVYQTEKTLNELGDKVSAEEKSEIEAKIEEVKKVKDGDDIEAIKKAMEDLTQAFYKVSEKLYQQNGGAQGQGFDPNNMGGANAGAGATNNNDDNVVDADFEVQDDK.

A Phosphothreonine; by autocatalysis modification is found at T175. Residues 578-619 (NGGAQGQGFDPNNMGGANAGAGATNNNDDNVVDADFEVQDDK) form a disordered region. Over residues 589 to 606 (NNMGGANAGAGATNNNDD) the composition is skewed to low complexity. Acidic residues predominate over residues 607-619 (NVVDADFEVQDDK).

This sequence belongs to the heat shock protein 70 family.

Acts as a chaperone. The sequence is that of Chaperone protein DnaK from Clostridium perfringens (strain ATCC 13124 / DSM 756 / JCM 1290 / NCIMB 6125 / NCTC 8237 / Type A).